The following is an 826-amino-acid chain: Protein lozenge (826 aa).

Disordered stretches follow at residues 1 to 45, 87 to 171, and 214 to 263; these read MHLH…ASQT, PVSV…WSSS, and ASVG…NNNN. Positions 12 to 24 are enriched in pro residues; the sequence is PPSPSPNPTPTPS. Over residues 106-141 the composition is skewed to basic residues; that stretch reads SHHHHHLHHHYSPYHHAHPYHPPHPHAPHHHHHHHP. The segment covering 142–153 has biased composition (pro residues); sequence PYPYPPAGPHPP. Polar residues predominate over residues 156–171; the sequence is VTSSSTSPTGNGWSSS. The region spanning 275–403 is the Runt domain; the sequence is LVQKRQQEHP…TVDGPREPRS (129 aa). Residues 774-798 are compositionally biased toward low complexity; the sequence is QQQQQQQQQQQQVHHPQQQQVESAG. The disordered stretch occupies residues 774-826; that stretch reads QQQQQQQQQQQQVHHPQQQQVESAGEVGGSGAGGVESAREEDVGDLSQVWRPY.

In terms of tissue distribution, expressed in the pupal eye during programmed cell death.

The protein localises to the nucleus. Its function is as follows. Involved in prepatterning photoreceptor precursors in the developing eye; in the larval eye disk it defines a subset of cells as an equipotential group that is competent to respond to the sevenless developmental signal and another subset that confer proper photoreceptor identity by positively regulating the homeo box gene Bar. Involved in the aop/pnt dynamic in a Ras-dependent manner to regulate pros expression. Promotes apoptosis in the pupal eye by directly activating aos and klu. Also modulates hid- and rpr-mediated cell death. Regulates amos function in olfactory sensilla development. This is Protein lozenge (lz) from Drosophila melanogaster (Fruit fly).